The sequence spans 146 residues: D-aminoacyl-tRNA deacylase (146 aa).

A Gly-cisPro motif, important for rejection of L-amino acids motif is present at residues 138-139 (GP).

The protein belongs to the DTD family. As to quaternary structure, homodimer.

The protein resides in the cytoplasm. It carries out the reaction glycyl-tRNA(Ala) + H2O = tRNA(Ala) + glycine + H(+). The enzyme catalyses a D-aminoacyl-tRNA + H2O = a tRNA + a D-alpha-amino acid + H(+). In terms of biological role, an aminoacyl-tRNA editing enzyme that deacylates mischarged D-aminoacyl-tRNAs. Also deacylates mischarged glycyl-tRNA(Ala), protecting cells against glycine mischarging by AlaRS. Acts via tRNA-based rather than protein-based catalysis; rejects L-amino acids rather than detecting D-amino acids in the active site. By recycling D-aminoacyl-tRNA to D-amino acids and free tRNA molecules, this enzyme counteracts the toxicity associated with the formation of D-aminoacyl-tRNA entities in vivo and helps enforce protein L-homochirality. The polypeptide is D-aminoacyl-tRNA deacylase (Xanthomonas campestris pv. campestris (strain 8004)).